An 804-amino-acid chain; its full sequence is Cyclic di-GMP-binding protein (804 aa).

The N-terminal stretch at 1-18 (MKMVSLIALLVFATGAQA) is a signal peptide. Over 19-766 (APIASKAPAH…DWYMHNHPFR (748 aa)) the chain is Periplasmic. Residues 24 to 69 (KAPAHQPTGSDLPPLPAAAPVAPAAQPSAQAVDPASAAPASDAGSA) are disordered. Residues 767 to 787 (VIVVGLVGCLLVVAVLVRALF) traverse the membrane as a helical segment. The Cytoplasmic segment spans residues 788-804 (RHAMFRRRQLQEERQKS).

Belongs to the AcsB/BcsB family. Tightly associated with the cellulose synthase catalytic subunit.

The protein localises to the cell inner membrane. It participates in glycan metabolism; bacterial cellulose biosynthesis. Its function is as follows. Binds the cellulose synthase activator, bis-(3'-5') cyclic diguanylic acid (c-di-GMP). This chain is Cyclic di-GMP-binding protein (bcsBI), found in Komagataeibacter xylinus (Gluconacetobacter xylinus).